The sequence spans 268 residues: MADQSIISALVLGLIEGLTEFIPVSSTAHVLLAGHFLGFKSPGNTFAVLIQLGAILAILLVYFQKLLAIALALPTSVKARRFVFSVLLAFLPAALIGAAAHGFIKSVLFETPMLICVVLIVGGIILYAIDRLPLTPRYTDVFDYPPSLALKIGLFQCLAMIPGTSRSGATIAGALLMGTDKRSAAEFSFFLAMPTMVGAFALDLYKNRDALSFDDVGLIAAGFIAAFIAGIFVVRSLLDFVSHRGFTPFAIWRILVGTAGLVGLWLLG.

A run of 7 helical transmembrane segments spans residues 5–25 (SIIS…IPVS), 43–63 (GNTF…LVYF), 84–104 (FSVL…HGFI), 107–127 (VLFE…IILY), 184–204 (AAEF…ALDL), 213–233 (FDDV…GIFV), and 248–268 (PFAI…WLLG).

The protein belongs to the UppP family.

Its subcellular location is the cell inner membrane. It carries out the reaction di-trans,octa-cis-undecaprenyl diphosphate + H2O = di-trans,octa-cis-undecaprenyl phosphate + phosphate + H(+). Its function is as follows. Catalyzes the dephosphorylation of undecaprenyl diphosphate (UPP). Confers resistance to bacitracin. This is Undecaprenyl-diphosphatase from Rhizobium meliloti (strain 1021) (Ensifer meliloti).